We begin with the raw amino-acid sequence, 355 residues long: MATPEEKAKALEAALGQIEKQFGKGAIMKLGETQKLDIEAISTGSLSLDVALGIGGLPMGRIVEIFGPESSGKTTLTLSVIAQAQKAGKTCAFIDAEHALDPIYAAKLGVDVKELLISQPDNGEQALEICDALVRSGAVDVVIVDSVAALTPKAEIEGEMGDTHVGLQARLMSQALRKLTGQIKNSNCLVVFINQIRMKIGVVFGNPETTTGGNALKFYASVRLDIRRVGSIKNGDEVIGNETRVKVVKNKVAPPFRQVDFQILYGEGISRNGELIELGVKHKLVNKSGAWFSYEGEKIGQGKTNAMKWLAEHPEQAAILEQKLRSELLANPEKALLADLEAESESNISEVESDF.

67–74 lines the ATP pocket; sequence GPESSGKT.

This sequence belongs to the RecA family.

The protein localises to the cytoplasm. In terms of biological role, can catalyze the hydrolysis of ATP in the presence of single-stranded DNA, the ATP-dependent uptake of single-stranded DNA by duplex DNA, and the ATP-dependent hybridization of homologous single-stranded DNAs. It interacts with LexA causing its activation and leading to its autocatalytic cleavage. In Histophilus somni (strain 2336) (Haemophilus somnus), this protein is Protein RecA.